We begin with the raw amino-acid sequence, 147 residues long: Cyanate hydratase (147 aa).

Catalysis depends on residues R88, E91, and S114.

This sequence belongs to the cyanase family.

It catalyses the reaction cyanate + hydrogencarbonate + 3 H(+) = NH4(+) + 2 CO2. Functionally, catalyzes the reaction of cyanate with bicarbonate to produce ammonia and carbon dioxide. This Albidiferax ferrireducens (strain ATCC BAA-621 / DSM 15236 / T118) (Rhodoferax ferrireducens) protein is Cyanate hydratase.